The chain runs to 363 residues: Ribosomal RNA large subunit methyltransferase M (363 aa).

Residues serine 187, 220 to 223 (CPGG), aspartate 239, aspartate 259, and aspartate 276 contribute to the S-adenosyl-L-methionine site. The active-site Proton acceptor is lysine 305.

This sequence belongs to the class I-like SAM-binding methyltransferase superfamily. RNA methyltransferase RlmE family. RlmM subfamily. Monomer.

The protein localises to the cytoplasm. It catalyses the reaction cytidine(2498) in 23S rRNA + S-adenosyl-L-methionine = 2'-O-methylcytidine(2498) in 23S rRNA + S-adenosyl-L-homocysteine + H(+). Catalyzes the 2'-O-methylation at nucleotide C2498 in 23S rRNA. This Shewanella loihica (strain ATCC BAA-1088 / PV-4) protein is Ribosomal RNA large subunit methyltransferase M.